Consider the following 366-residue polypeptide: Pyrimidine monooxygenase RutA (366 aa).

FMN contacts are provided by residues 49 to 50 (IK), Asn115, Glu124, 140 to 141 (RY), and Ser190.

The protein belongs to the NtaA/SnaA/DszA monooxygenase family. RutA subfamily.

It catalyses the reaction uracil + FMNH2 + NADH + O2 = (Z)-3-ureidoacrylate + FMN + NAD(+) + H2O + H(+). It carries out the reaction thymine + FMNH2 + NADH + O2 = (Z)-2-methylureidoacrylate + FMN + NAD(+) + H2O + H(+). Catalyzes the pyrimidine ring opening between N-3 and C-4 by an unusual flavin hydroperoxide-catalyzed mechanism, adding oxygen atoms in the process to yield ureidoacrylate peracid, that immediately reacts with FMN forming ureidoacrylate and FMN-N(5)-oxide. The FMN-N(5)-oxide reacts spontaneously with NADH to produce FMN. Requires the flavin reductase RutF to regenerate FMN in vivo. The sequence is that of Pyrimidine monooxygenase RutA from Serratia proteamaculans (strain 568).